Here is a 306-residue protein sequence, read N- to C-terminus: 5'-hydroxyaverantin dehydrogenase (306 aa).

NADP(+)-binding residues include Ser-25, Ile-27, Gln-48, Lys-52, and Asp-73. Ser-173 serves as the catalytic Proton donor. 4 residues coordinate NADP(+): Tyr-187, Lys-191, Val-220, and Thr-222. Residue Tyr-187 is the Proton acceptor of the active site. Lys-191 serves as the catalytic Lowers pKa of active site Tyr.

This sequence belongs to the short-chain dehydrogenases/reductases (SDR) family. In terms of assembly, homodimer.

Its subcellular location is the cytoplasm. The protein localises to the cytosol. The catalysed reaction is (1'S,5'S)-5'-hydroxyaverantin + NAD(+) = (S)-5'-oxoaverantin + NADH + H(+). It carries out the reaction (1'S,5'R)-5'-hydroxyaverantin + NAD(+) = (S)-5'-oxoaverantin + NADH + 2 H(+). It participates in mycotoxin biosynthesis. 5'-hydroxyaverantin dehydrogenase; part of the fragmented gene cluster that mediates the biosynthesis of dothistromin (DOTH), a polyketide toxin very similar in structure to the aflatoxin precursor, versicolorin B. The first step of the pathway is the conversion of acetate to norsolorinic acid (NOR) and requires the fatty acid synthase subunits hexA and hexB, as well as the polyketide synthase pksA. PksA combines a hexanoyl starter unit and 7 malonyl-CoA extender units to synthesize the precursor NOR. The hexanoyl starter unit is provided to the acyl-carrier protein (ACP) domain by the fungal fatty acid synthase hexA/hexB. The second step is the conversion of NOR to averantin (AVN) and requires the norsolorinic acid ketoreductase nor1, which catalyzes the dehydration of norsolorinic acid to form (1'S)-averantin. The cytochrome P450 monooxygenase avnA then catalyzes the hydroxylation of AVN to 5'hydroxyaverantin (HAVN). The next step is performed by adhA that transforms HAVN to averufin (AVF). Averufin might then be converted to hydroxyversicolorone by cypX and avfA. Hydroxyversicolorone is further converted versiconal hemiacetal acetate (VHA) by moxY. VHA is then the substrate for the versiconal hemiacetal acetate esterase est1 to yield versiconal (VAL). Versicolorin B synthase vbsA then converts VAL to versicolorin B (VERB) by closing the bisfuran ring. Then, the activity of the versicolorin B desaturase verB leads to versicolorin A (VERA). DotB, a predicted chloroperoxidase, may perform epoxidation of the A-ring of VERA. Alternatively, a cytochrome P450, such as cypX or avnA could catalyze this step. It is also possible that another, uncharacterized, cytochrome P450 enzyme is responsible for this step. Opening of the epoxide could potentially be achieved by the epoxide hydrolase epoA. However, epoA seems not to be required for DOTH biosynthesis, but other epoxide hydrolases may have the ability to complement this hydrolysis. Alternatively, opening of the epoxide ring could be achieved non-enzymatically. The next step is the deoxygenation of ring A to yield the 5,8-dihydroxyanthraquinone which is most likely catalyzed by the NADPH dehydrogenase encoded by ver1. The last stages of DOTH biosynthesis are proposed to involve hydroxylation of the bisfuran. OrdB and norB might have oxidative roles here. An alternative possibility is that cytochrome P450 monoogenases such as avnA and cypX might perform these steps in addition to previously proposed steps. The chain is 5'-hydroxyaverantin dehydrogenase from Dothistroma septosporum (strain NZE10 / CBS 128990) (Red band needle blight fungus).